The chain runs to 698 residues: MTSREQLVLQVLQELQEAVESEGLEGLVGAALEAKQVLSSFALPTCREGGPGPQVLEVDSVALSLYPEDAPRNMLPLVCKGEGSLLFEAASMLLWGDSGLSLELRARTVVEMLLHRHYYLQGMIDSKVMLQAVRYSLCSEESPEMTSLPSATLEAIFDADVKATCFPSSFSNVWHLYALASVLQRNIYSIYPMRNLKIRPYFNRVIRPRRCDHMPATLHIMWAGQPLTNHLFRHQYFAPVVGLEEVEAESATTSLAPTPPALAPLPPPAKTLELLSQDPGLSYSYLCERYSVTKSTFYRWRRQSQEHRQKVATRFSAKHFLQDSFHRGGVVPLQQFLQRFPEISRSTYYAWKHELLGSGTCQALGPMEELEKLTEEQVAEGLGCSSPAVSSPGMVLMQRAKLYLEHCISLNTLVPYRCFKRRFPGISRSTYYNWRRKALRRNPSFKPAPVLSVAGATQPASVGEKALLPWEGEVGEEAGKATGGGQPAPREFLPLRMPLSRWQRRLRREARKQVLSGHLPFCRFRLRYPSLSPSTFWVWKSLARGWPRSLSKLHIQAPTLGKGGIQEVEEKQEKEAGRNVTAAMAPPAGTLQMTASPGEDPGAALGGPSREGALQEGAMAQGRPMVAAAGGRDGQVLVMDMLATTKFKAQAKLFLQKRFQSKSFPSYKEFSALFPLTARSTYYMWKRALYDGLTLVDG.

The protein belongs to the vertnin family.

It is found in the nucleus. Acts as a transcription factor that regulates development of thoracic vertebrae. In Sus scrofa (Pig), this protein is Vertnin (VRTN).